Reading from the N-terminus, the 217-residue chain is MRLVLLGPPGAGKGTQAREINQRLAIPHISTGDMFREAIKRGTPLGRQAEVYIKGGRLVPDEVTIGLVQERLVQPDCRNGFLLDGFPRTVAQAEALDSWLSSRGERLDAVIDIEVPRDALLERLTGRRVCRQCGATYHVRYNPPAVPGKCDACGQDLVQRADDTEATVNKRLDVYNEQTAPLVNYYRQRGLLKEIDGSQAIPAVILAIGRALGRDWQ.

An ATP-binding site is contributed by 10-15; it reads GAGKGT. Positions 30–59 are NMP; it reads STGDMFREAIKRGTPLGRQAEVYIKGGRLV. Residues Thr31, Arg36, 57 to 59, 85 to 88, and Gln92 each bind AMP; these read RLV and GFPR. The interval 126-163 is LID; that stretch reads GRRVCRQCGATYHVRYNPPAVPGKCDACGQDLVQRADD. Arg127 serves as a coordination point for ATP. Residues Cys130 and Cys133 each coordinate Zn(2+). 136–137 serves as a coordination point for ATP; sequence TY. 2 residues coordinate Zn(2+): Cys150 and Cys153. Arg160 and Arg171 together coordinate AMP. Gln199 is a binding site for ATP.

Belongs to the adenylate kinase family. In terms of assembly, monomer.

It is found in the cytoplasm. The catalysed reaction is AMP + ATP = 2 ADP. It participates in purine metabolism; AMP biosynthesis via salvage pathway; AMP from ADP: step 1/1. In terms of biological role, catalyzes the reversible transfer of the terminal phosphate group between ATP and AMP. Plays an important role in cellular energy homeostasis and in adenine nucleotide metabolism. The polypeptide is Adenylate kinase (Moorella thermoacetica (strain ATCC 39073 / JCM 9320)).